The chain runs to 415 residues: tRNA(Met) cytidine acetate ligase (415 aa).

ATP-binding positions include 7–20, Gly102, Asn165, and 190–191; these read IVEY…HLYH and RI.

The protein belongs to the TmcAL family.

It localises to the cytoplasm. It catalyses the reaction cytidine(34) in elongator tRNA(Met) + acetate + ATP = N(4)-acetylcytidine(34) in elongator tRNA(Met) + AMP + diphosphate. Its function is as follows. Catalyzes the formation of N(4)-acetylcytidine (ac(4)C) at the wobble position of elongator tRNA(Met), using acetate and ATP as substrates. First activates an acetate ion to form acetyladenylate (Ac-AMP) and then transfers the acetyl group to tRNA to form ac(4)C34. In Acetivibrio thermocellus (strain ATCC 27405 / DSM 1237 / JCM 9322 / NBRC 103400 / NCIMB 10682 / NRRL B-4536 / VPI 7372) (Clostridium thermocellum), this protein is tRNA(Met) cytidine acetate ligase.